The chain runs to 345 residues: Phosphoribosylformylglycinamidine cyclo-ligase (345 aa).

The protein belongs to the AIR synthase family.

The protein localises to the cytoplasm. It catalyses the reaction 2-formamido-N(1)-(5-O-phospho-beta-D-ribosyl)acetamidine + ATP = 5-amino-1-(5-phospho-beta-D-ribosyl)imidazole + ADP + phosphate + H(+). It functions in the pathway purine metabolism; IMP biosynthesis via de novo pathway; 5-amino-1-(5-phospho-D-ribosyl)imidazole from N(2)-formyl-N(1)-(5-phospho-D-ribosyl)glycinamide: step 2/2. This chain is Phosphoribosylformylglycinamidine cyclo-ligase, found in Shouchella clausii (strain KSM-K16) (Alkalihalobacillus clausii).